Here is a 191-residue protein sequence, read N- to C-terminus: Polysulfide reductase chain B (191 aa).

3 consecutive 4Fe-4S ferredoxin-type domains span residues 5–34 (YGMI…PDSV), 50–83 (GTLS…VNED), and 84–113 (GIVS…VDPV). Residues cysteine 14, cysteine 17, cysteine 20, cysteine 24, cysteine 61, cysteine 64, cysteine 69, cysteine 73, cysteine 93, cysteine 96, cysteine 99, cysteine 103, cysteine 120, cysteine 123, cysteine 136, and cysteine 140 each coordinate [4Fe-4S] cluster.

Functional polysulfide reductase is made up of three different (A, B, and C) subunits.

Functionally, component of the phosphorylative electron transport system with polysulfide as the terminal acceptor. The chain is Polysulfide reductase chain B (psrB) from Wolinella succinogenes (strain ATCC 29543 / DSM 1740 / CCUG 13145 / JCM 31913 / LMG 7466 / NCTC 11488 / FDC 602W) (Vibrio succinogenes).